We begin with the raw amino-acid sequence, 37 residues long: ATP synthase subunit O, mitochondrial (37 aa).

The protein belongs to the ATPase delta chain family. As to quaternary structure, F-type ATPases have 2 components, CF(1) - the catalytic core - and CF(0) - the membrane proton channel. CF(1) has five subunits: alpha(3), beta(3), gamma(1), delta(1), epsilon(1). CF(0) has three main subunits: a, b and c.

It localises to the mitochondrion. The protein localises to the mitochondrion inner membrane. Mitochondrial membrane ATP synthase (F(1)F(0) ATP synthase or Complex V) produces ATP from ADP in the presence of a proton gradient across the membrane which is generated by electron transport complexes of the respiratory chain. F-type ATPases consist of two structural domains, F(1) - containing the extramembraneous catalytic core and F(0) - containing the membrane proton channel, linked together by a central stalk and a peripheral stalk. During catalysis, ATP synthesis in the catalytic domain of F(1) is coupled via a rotary mechanism of the central stalk subunits to proton translocation. Part of the complex F(0) domain and the peripheric stalk, which acts as a stator to hold the catalytic alpha(3)beta(3) subcomplex and subunit a/ATP6 static relative to the rotary elements. The sequence is that of ATP synthase subunit O, mitochondrial from Solanum tuberosum (Potato).